The following is a 152-amino-acid chain: Small ribosomal subunit protein uS11B (152 aa).

A disordered region spans residues 131 to 152; that stretch reads EDVTPIPSDSTRRKGGRRGRRL. Residues 143 to 152 are compositionally biased toward basic residues; the sequence is RKGGRRGRRL.

It belongs to the universal ribosomal protein uS11 family.

This is Small ribosomal subunit protein uS11B from Anopheles gambiae (African malaria mosquito).